A 259-amino-acid polypeptide reads, in one-letter code: Glucose-1-phosphate thymidylyltransferase (259 aa).

Belongs to the inositol monophosphatase superfamily.

It carries out the reaction dTTP + alpha-D-glucose 1-phosphate + H(+) = dTDP-alpha-D-glucose + diphosphate. Its pathway is antibiotic biosynthesis; streptomycin biosynthesis. In Streptomyces griseus, this protein is Glucose-1-phosphate thymidylyltransferase (strO).